The primary structure comprises 363 residues: Probable L-tyrosine/L-aspartate decarboxylase (363 aa).

K208 bears the N6-(pyridoxal phosphate)lysine mark.

It belongs to the group II decarboxylase family. MfnA subfamily. Pyridoxal 5'-phosphate is required as a cofactor.

It carries out the reaction L-tyrosine + H(+) = tyramine + CO2. The enzyme catalyses L-aspartate + H(+) = beta-alanine + CO2. It participates in cofactor biosynthesis; methanofuran biosynthesis. Its pathway is cofactor biosynthesis; coenzyme A biosynthesis. Catalyzes the decarboxylation of L-tyrosine to produce tyramine for methanofuran biosynthesis. Can also catalyze the decarboxylation of L-aspartate to produce beta-alanine for coenzyme A (CoA) biosynthesis. The sequence is that of Probable L-tyrosine/L-aspartate decarboxylase from Methanothermobacter thermautotrophicus (strain ATCC 29096 / DSM 1053 / JCM 10044 / NBRC 100330 / Delta H) (Methanobacterium thermoautotrophicum).